The primary structure comprises 156 residues: SsrA-binding protein (156 aa).

Residues Lys-135–Arg-150 show a composition bias toward basic and acidic residues. Residues Lys-135–Thr-156 are disordered.

The protein belongs to the SmpB family.

It localises to the cytoplasm. In terms of biological role, required for rescue of stalled ribosomes mediated by trans-translation. Binds to transfer-messenger RNA (tmRNA), required for stable association of tmRNA with ribosomes. tmRNA and SmpB together mimic tRNA shape, replacing the anticodon stem-loop with SmpB. tmRNA is encoded by the ssrA gene; the 2 termini fold to resemble tRNA(Ala) and it encodes a 'tag peptide', a short internal open reading frame. During trans-translation Ala-aminoacylated tmRNA acts like a tRNA, entering the A-site of stalled ribosomes, displacing the stalled mRNA. The ribosome then switches to translate the ORF on the tmRNA; the nascent peptide is terminated with the 'tag peptide' encoded by the tmRNA and targeted for degradation. The ribosome is freed to recommence translation, which seems to be the essential function of trans-translation. This is SsrA-binding protein from Legionella pneumophila (strain Paris).